Consider the following 1239-residue polypeptide: Structural polyprotein (1239 aa).

The tract at residues 1-35 (MFPYPTLNYPPMAPINPMAYRDPNPPRQVAPFRPP) is necessary for nucleocapsid assembly and virus assembly. The tract at residues 1-101 (MFPYPTLNYP…RKPKPGKRQR (101 aa)) is disordered. Over residues 23–34 (PNPPRQVAPFRP) the composition is skewed to pro residues. The tract at residues 36 to 69 (LAAQIEDLRRSIANLTLKQRAPNPPAGPPAKRKK) is host transcription inhibition. The Supraphysiological nuclear export signal motif lies at 43–50 (LRRSIANL). Asparagine 49 carries an N-linked (GlcNAc...) asparagine; by host glycan. The short motif at 66–69 (KRKK) is the Nuclear localization signal element. The span at 79-101 (KKKRPPPPAKKQKRKPKPGKRQR) shows a compositional bias: basic residues. The binding to the viral RNA stretch occupies residues 81-111 (KRPPPPAKKQKRKPKPGKRQRMCMKLESDKT). The segment at 96–110 (PGKRQRMCMKLESDK) is ribosome-binding. Phosphoserine is present on serine 108. Residues 110-259 (KTFPIMLNGQ…KDTPEGSEPW (150 aa)) enclose the Peptidase S3 domain. Threonine 111 carries the phosphothreonine modification. Catalysis depends on histidine 136, which acts as the Charge relay system. Positions 152 to 157 (KKASIY) are interaction with spike glycoprotein E2. Catalysis depends on charge relay system residues aspartate 158 and serine 210. The interval 244-248 (QKGVT) is interaction with spike glycoprotein E2. Residues 260 to 271 (SLATVMCVLANI) are functions as an uncleaved signal peptide for the precursor of protein E3/E2. The Extracellular segment spans residues 260–681 (SLATVMCVLA…HVVVVYYYNR (422 aa)). Disulfide bonds link cysteine 266/cysteine 275, cysteine 280/cysteine 284, cysteine 283/cysteine 315, cysteine 341/cysteine 444, cysteine 344/cysteine 349, cysteine 411/cysteine 425, cysteine 472/cysteine 585, cysteine 521/cysteine 545, and cysteine 523/cysteine 539. Asparagine 270 carries an N-linked (GlcNAc...) asparagine; by host glycan. Residue asparagine 637 is glycosylated (N-linked (GlcNAc...) asparagine; by host). The helical transmembrane segment at 682–702 (YPLTTIIGLCTCVAIIMVSCD) threads the bilayer. Topologically, residues 703 to 742 (HPCGSFSGLRNLCITPYKLAPNAQVPILLALLCCIKPTRA) are cytoplasmic. Residue cysteine 705 is the site of S-palmitoyl cysteine; by host attachment. Residues 710-714 (GLRNL) form an interaction with the capsid protein region. Residues 714-734 (LCITPYKLAPNAQVPILLALL) form a transient transmembrane before p62-6K protein processing region. 3 S-palmitoyl cysteine; by host lipidation sites follow: cysteine 715, cysteine 735, and cysteine 736. Cysteine 715 and cysteine 736 form a disulfide bridge. Residues 743–754 (DDTLQVLNYLWN) are Extracellular-facing. A helical membrane pass occupies residues 755–775 (NNQNFFWMQTLIPLAALIVCM). Arginine 776 is a topological domain (cytoplasmic). Residues 777–797 (MLAALFCCGPAFLLVCGAWAA) form a helical membrane-spanning segment. Residues 798 to 1215 (AYEHTAVMPN…WSWLKVLVGG (418 aa)) lie on the Extracellular side of the membrane. Disulfide bonds link cysteine 847/cysteine 912, cysteine 860/cysteine 892, cysteine 861/cysteine 894, and cysteine 866/cysteine 876. The tract at residues 882–899 (VYPFMWGGAYCFCDTENT) is E1 fusion peptide loop. 2 N-linked (GlcNAc...) asparagine; by host glycosylation sites follow: asparagine 932 and asparagine 1069. Cystine bridges form between cysteine 1058–cysteine 1070, cysteine 1100–cysteine 1175, and cysteine 1105–cysteine 1179. Residues 1216-1236 (TSAFIVLGLIATAVVALVLFF) form a helical membrane-spanning segment. Residues 1237–1239 (HRH) lie on the Cytoplasmic side of the membrane.

In terms of assembly, homodimer. Homomultimer. Interacts with host karyopherin KPNA4; this interaction allows the nuclear import of the viral capsid protein. Interacts with spike glycoprotein E2. Interacts with host IRAK1; the interaction leads to inhibition of IRAK1-dependent signaling. Part of a tetrameric complex composed of host CRM1, host importin alpha/beta dimer and the viral capsid; this complex blocks the receptor-mediated transport through the nuclear pore. Interacts with host phosphatase PPP1CA; this interaction dephosphorylates the capsid protein, which increases its ability to bind to the viral genome. As to quaternary structure, the precursor of protein E3/E2 and E1 form a heterodimer shortly after synthesis. The precursor of protein E3/E2 and E1 form a heterodimer shortly after synthesis. Processing of the precursor of protein E3/E2 into E2 and E3 results in a heterodimer of the spike glycoproteins E2 and E1. Spike at virion surface are constituted of three E2-E1 heterodimers. After target cell attachment and endocytosis, E1 change conformation to form homotrimers. E2-E1 heterodimers interact with host VLDLR or LRP8/APOER2 to mediate viral entry. Interacts with 6K protein. In terms of assembly, interacts with spike glycoprotein E1. Processing of the precursor of protein E3/E2 into E2 and E3 results in a heterodimer of the spike glycoproteins E2 and E1. Spike at virion surface are constituted of a trimer of E2-E1 heterodimers. Interacts with 6K protein. E2-E1 heterodimers interact with host VLDLR or LRP8/APOER2 to mediate viral entry. Interacts (via E2-A) with host VLDLR (via class A repeats); this interaction mediates viral entry into host cell. Interacts with host LRP8/APOER2 (via class A repeats); this interaction mediates viral entry into host cell. As to quaternary structure, oligomer. Interacts with spike glycoprotein E1. Interacts with spike glycoprotein E2. In terms of processing, structural polyprotein: Specific enzymatic cleavages in vivo yield mature proteins. Capsid protein is auto-cleaved during polyprotein translation, unmasking a signal peptide at the N-terminus of the precursor of E3/E2. The remaining polyprotein is then targeted to the host endoplasmic reticulum, where host signal peptidase cleaves it into pE2, 6K and E1 proteins. pE2 is further processed to mature E3 and E2 by host furin in trans-Golgi vesicle. Phosphorylated on serine and threonine residues. Post-translationally, palmitoylated via thioester bonds. These palmitoylations may induce disruption of the C-terminus transmembrane. This would result in the reorientation of E2 C-terminus from lumenal to cytoplasmic side. In terms of processing, N-glycosylated. Palmitoylated via thioester bonds.

The protein localises to the virion. It is found in the host cytoplasm. It localises to the host cell membrane. Its subcellular location is the host nucleus. The protein resides in the virion membrane. The protein localises to the host Golgi apparatus. It is found in the host trans-Golgi network. It localises to the host endoplasmic reticulum. It catalyses the reaction Autocatalytic release of the core protein from the N-terminus of the togavirus structural polyprotein by hydrolysis of a -Trp-|-Ser- bond.. In terms of biological role, forms an icosahedral capsid with a T=4 symmetry composed of 240 copies of the capsid protein surrounded by a lipid membrane through which penetrate 80 spikes composed of trimers of E1-E2 heterodimers. The capsid protein binds to the viral RNA genome at a site adjacent to a ribosome binding site for viral genome translation following genome release. Possesses a protease activity that results in its autocatalytic cleavage from the nascent structural protein. Following its self-cleavage, the capsid protein transiently associates with ribosomes, and within several minutes the protein binds to viral RNA and rapidly assembles into icosahedric core particles. The resulting nucleocapsid eventually associates with the cytoplasmic domain of the spike glycoprotein E2 at the cell membrane, leading to budding and formation of mature virions. In case of infection, new virions attach to target cells and after clathrin-mediated endocytosis their membrane fuses with the host endosomal membrane. This leads to the release of the nucleocapsid into the cytoplasm, followed by an uncoating event necessary for the genomic RNA to become accessible. The uncoating might be triggered by the interaction of capsid proteins with ribosomes. Binding of ribosomes would release the genomic RNA since the same region is genomic RNA-binding and ribosome-binding. Specifically inhibits interleukin-1 receptor-associated kinase 1/IRAK1-dependent signaling during viral entry, representing a means by which the alphaviruses may evade innate immune detection and activation prior to viral gene expression. Inhibits host transcription. Forms a tetrameric complex with XPO1/CRM1 and the nuclear import receptor importin. This complex blocks the central channel of host nuclear pores thereby inhibiting the receptor-mediated nuclear transport and thus the host mRNA and rRNA transcription. The inhibition of transcription is linked to a cytopathic effect on the host cell. Its function is as follows. Provides the signal sequence for the translocation of the precursor of protein E3/E2 to the host endoplasmic reticulum. Furin-cleaved E3 remains associated with spike glycoprotein E1 and mediates pH protection of the latter during the transport via the secretory pathway. After virion release from the host cell, the assembly protein E3 is gradually released in the extracellular space. Functionally, plays a role in viral attachment to target host cell, by binding to the cell receptors VLDLR or LRP8/APOER2. Synthesized as a p62 precursor which is processed by furin at the cell membrane just before virion budding, giving rise to E2-E1 heterodimer. The p62-E1 heterodimer is stable, whereas E2-E1 is unstable and dissociate at low pH. p62 is processed at the last step, presumably to avoid E1 fusion activation before its final export to cell surface. E2 C-terminus contains a transitory transmembrane that would be disrupted by palmitoylation, resulting in reorientation of the C-terminal tail from lumenal to cytoplasmic side. This step is critical since E2 C-terminus is involved in budding by interacting with capsid proteins. This release of E2 C-terminus in cytoplasm occurs lately in protein export, and precludes premature assembly of particles at the endoplasmic reticulum membrane. Acts as a viroporin that participates in virus glycoprotein processing and transport to the plasma membrane, cell permeabilization and budding of viral particles. Disrupts the calcium homeostasis of the cell, probably at the endoplasmic reticulum level. This leads to cytoplasmic calcium elevation. Because of its lipophilic properties, the 6K protein is postulated to influence the selection of lipids that interact with the transmembrane domains of the glycoproteins, which, in turn, affects the deformability of the bilayer required for the extreme curvature that occurs as budding proceeds. Present in low amount in virions, about 3% compared to viral glycoproteins. In terms of biological role, class II viral fusion protein. Fusion activity is inactive as long as E1 is bound to E2 in mature virion. After virus attachment to target cell via host VLDLR or LRP8/APOER2 and endocytosis, acidification of the endosome induces dissociation of E1/E2 heterodimer and concomitant trimerization of the E1 subunits. This E1 trimer is fusion active, and promotes release of viral nucleocapsid in cytoplasm after endosome and viral membrane fusion. Efficient fusion requires the presence of cholesterol and sphingolipid in the target membrane. This Aedes (Human) protein is Structural polyprotein.